The primary structure comprises 160 residues: Nucleotide-binding protein CBU_0114 (160 aa).

Belongs to the YajQ family.

Functionally, nucleotide-binding protein. The chain is Nucleotide-binding protein CBU_0114 from Coxiella burnetii (strain RSA 493 / Nine Mile phase I).